Here is a 537-residue protein sequence, read N- to C-terminus: Frizzled-4 (537 aa).

The N-terminal stretch at Met-1–Gly-36 is a signal peptide. The Extracellular portion of the chain corresponds to Phe-37–Ser-212. An FZ domain is found at Glu-40–Gly-161. 8 disulfides stabilise this stretch: Cys-45/Cys-106, Cys-53/Cys-99, Cys-90/Cys-128, Cys-117/Cys-158, Cys-121/Cys-145, Cys-181/Cys-200, Cys-204/Cys-282, and Cys-302/Cys-377. The N-linked (GlcNAc...) asparagine glycan is linked to Asn-59. An N-linked (GlcNAc...) asparagine glycan is attached at Asn-144. A helical transmembrane segment spans residues Arg-213–Ile-243. Residues Asp-244 to Ser-249 lie on the Cytoplasmic side of the membrane. A helical transmembrane segment spans residues Tyr-250 to Val-275. Over Gly-276–Asn-299 the chain is Extracellular. The chain crosses the membrane as a helical span at residues Thr-300–Leu-333. Residues Lys-334–Gly-336 are Cytoplasmic-facing. A helical transmembrane segment spans residues His-337 to Met-365. Residues Arg-366–Asn-383 are Extracellular-facing. The chain crosses the membrane as a helical span at residues Leu-384–Ser-418. The Cytoplasmic segment spans residues Asn-419–Glu-431. Residues Arg-432 to Ser-460 form a helical membrane-spanning segment. Topologically, residues Asn-461 to Asn-473 are extracellular. A helical transmembrane segment spans residues Met-474 to Ile-495. The Cytoplasmic portion of the chain corresponds to Trp-496–Val-537. Residues Lys-499–Trp-504 carry the Lys-Thr-X-X-X-Trp motif, mediates interaction with the PDZ domain of Dvl family members motif. The PDZ-binding signature appears at Thr-535 to Val-537.

The protein belongs to the G-protein coupled receptor Fz/Smo family. Interacts with MAGI3 and NDP. Component of a complex, at least composed of TSPAN12, FZD4 and norrin (NDP). Interacts (via FZ domain) with TSKU; TSKU competes with WNT2B for binding to FZD4, inhibiting Wnt signaling and repressing peripheral eye development. Interacts with glypican GPC3. Ubiquitinated by ZNRF3, leading to its degradation by the proteasome. Almost ubiquitous. Largely expressed in adult heart, skeletal muscle, ovary, and fetal kidney. Moderate amounts in adult liver, kidney, pancreas, spleen, and fetal lung, and small amounts in placenta, adult lung, prostate, testis, colon, fetal brain and liver.

Its subcellular location is the cell membrane. In terms of biological role, receptor for Wnt proteins. Most frizzled receptors are coupled to the beta-catenin (CTNNB1) canonical signaling pathway, which leads to the activation of disheveled proteins, inhibition of GSK-3 kinase, nuclear accumulation of beta-catenin (CTNNB1) and activation of Wnt target genes. Plays a critical role in retinal vascularization by acting as a receptor for Wnt proteins and norrin (NDP). In retina, it can be activated by Wnt protein-binding and also by Wnt-independent signaling via binding of norrin (NDP), promoting in both cases beta-catenin (CTNNB1) accumulation and stimulation of LEF/TCF-mediated transcriptional programs. A second signaling pathway involving PKC and calcium fluxes has been seen for some family members, but it is not yet clear if it represents a distinct pathway or if it can be integrated in the canonical pathway, as PKC seems to be required for Wnt-mediated inactivation of GSK-3 kinase. Both pathways seem to involve interactions with G-proteins. May be involved in transduction and intercellular transmission of polarity information during tissue morphogenesis and/or in differentiated tissues. The chain is Frizzled-4 (FZD4) from Homo sapiens (Human).